The primary structure comprises 193 residues: NAD(P)H-quinone oxidoreductase subunit J (193 aa).

The disordered stretch occupies residues 1-21 (MSDSAPTNPTPTNPAPEESAS).

It belongs to the complex I 30 kDa subunit family. As to quaternary structure, NDH-1 can be composed of about 15 different subunits; different subcomplexes with different compositions have been identified which probably have different functions.

The protein localises to the cellular thylakoid membrane. The enzyme catalyses a plastoquinone + NADH + (n+1) H(+)(in) = a plastoquinol + NAD(+) + n H(+)(out). It carries out the reaction a plastoquinone + NADPH + (n+1) H(+)(in) = a plastoquinol + NADP(+) + n H(+)(out). In terms of biological role, NDH-1 shuttles electrons from an unknown electron donor, via FMN and iron-sulfur (Fe-S) centers, to quinones in the respiratory and/or the photosynthetic chain. The immediate electron acceptor for the enzyme in this species is believed to be plastoquinone. Couples the redox reaction to proton translocation, and thus conserves the redox energy in a proton gradient. Cyanobacterial NDH-1 also plays a role in inorganic carbon-concentration. The polypeptide is NAD(P)H-quinone oxidoreductase subunit J (Synechococcus sp. (strain CC9902)).